A 1556-amino-acid polypeptide reads, in one-letter code: Lysine-specific demethylase 5C (1556 aa).

Residues Cys-14 to Pro-55 form the JmjN domain. Residues Thr-79–Ser-169 enclose the ARID domain. The span at Leu-197 to Asn-207 shows a compositional bias: polar residues. Positions Leu-197–Ile-227 are disordered. Residues Lys-205, Lys-229, Lys-244, and Lys-274 each participate in a glycyl lysine isopeptide (Lys-Gly) (interchain with G-Cter in SUMO2) cross-link. The segment at Leu-257–Glu-303 is disordered. The segment covering Val-273 to Val-283 has biased composition (basic and acidic residues). Position 287 is a phosphoserine (Ser-287). A Glycyl lysine isopeptide (Lys-Gly) (interchain with G-Cter in SUMO2) cross-link involves residue Lys-295. Residues Ser-301 and Ser-317 each carry the phosphoserine modification. The PHD-type 1 zinc-finger motif lies at Ser-324–Ala-374. The region spanning Glu-468–Arg-634 is the JmjC domain. Fe cation contacts are provided by His-514, Asp-517, and His-602. Residues Ser-893 and Ser-897 each carry the phosphoserine modification. Residue Lys-1127 forms a Glycyl lysine isopeptide (Lys-Gly) (interchain with G-Cter in SUMO2) linkage. Residues Thr-1185–Ser-1250 form a PHD-type 2 zinc finger. 2 disordered regions span residues Leu-1315–Lys-1362 and Glu-1441–Leu-1556. A compositionally biased stretch (basic and acidic residues) spans Pro-1335–Pro-1345. Ser-1359 is modified (phosphoserine). Over residues Ser-1445–Val-1460 the composition is skewed to basic residues. Over residues Asp-1461–Arg-1478 the composition is skewed to basic and acidic residues. The span at Glu-1485–Gly-1500 shows a compositional bias: acidic residues. Composition is skewed to polar residues over residues Ser-1513 to Gly-1522 and Ser-1530 to Ser-1540. The segment covering Pro-1541–Leu-1556 has biased composition (low complexity).

This sequence belongs to the JARID1 histone demethylase family. In terms of assembly, part of two distinct complexes, one containing E2F6, and the other containing REST. Interacts with ZMYND8. Requires Fe(2+) as cofactor.

It localises to the nucleus. It catalyses the reaction N(6),N(6),N(6)-trimethyl-L-lysyl(4)-[histone H3] + 3 2-oxoglutarate + 3 O2 = L-lysyl(4)-[histone H3] + 3 formaldehyde + 3 succinate + 3 CO2. Its function is as follows. Histone demethylase that specifically demethylates 'Lys-4' of histone H3, thereby playing a central role in histone code. Does not demethylate histone H3 'Lys-9', H3 'Lys-27', H3 'Lys-36', H3 'Lys-79' or H4 'Lys-20'. Demethylates trimethylated and dimethylated but not monomethylated H3 'Lys-4'. Participates in transcriptional repression of neuronal genes by recruiting histone deacetylases and REST at neuron-restrictive silencer elements. Represses the CLOCK-BMAL1 heterodimer-mediated transcriptional activation of the core clock component PER2. The polypeptide is Lysine-specific demethylase 5C (KDM5C) (Canis lupus familiaris (Dog)).